The primary structure comprises 312 residues: Very-long-chain 3-oxoacyl-CoA reductase (312 aa).

The chain crosses the membrane as a helical span at residues 4 to 24; the sequence is ALPAAGFLYWVGASTIAYLTL. Residue 50–79 participates in NADP(+) binding; that stretch reads GEWAVVTGGTDGIGKSYAEELAKRGMKIVL. The next 2 membrane-spanning stretches (helical) occupy residues 182–202 and 271–291; these read GVILNISSASGMLPVPLLTVY and GYVIHAIMGSINSILPRWIYF. Residue Ser189 coordinates substrate. Tyr202 (proton acceptor) is an active-site residue. The short motif at 308–312 is the Di-lysine motif element; that stretch reads KTKKN.

The protein belongs to the short-chain dehydrogenases/reductases (SDR) family. 17-beta-HSD 3 subfamily.

The protein localises to the endoplasmic reticulum membrane. It carries out the reaction a very-long-chain (3R)-3-hydroxyacyl-CoA + NADP(+) = a very-long-chain 3-oxoacyl-CoA + NADPH + H(+). The catalysed reaction is 17beta-estradiol + NAD(+) = estrone + NADH + H(+). The enzyme catalyses 17beta-estradiol + NADP(+) = estrone + NADPH + H(+). It catalyses the reaction 3-oxooctadecanoyl-CoA + NADPH + H(+) = (3R)-hydroxyoctadecanoyl-CoA + NADP(+). It carries out the reaction (7Z,10Z,13Z,16Z)-3-oxodocosatetraenoyl-CoA + NADPH + H(+) = (3R)-hydroxy-(7Z,10Z,13Z,16Z)-docosatetraenoyl-CoA + NADP(+). The catalysed reaction is 3-oxo-(7Z,10Z,13Z,16Z,19Z)-docosapentaenoyl-CoA + NADPH + H(+) = (3R)-hydroxy-(7Z,10Z,13Z,16Z,19Z)-docosapentaenoyl-CoA + NADP(+). The enzyme catalyses (8Z,11Z,14Z)-3-oxoeicosatrienoyl-CoA + NADPH + H(+) = (3R)-hydroxy-(8Z,11Z,14Z)-eicosatrienoyl-CoA + NADP(+). It participates in lipid metabolism; fatty acid biosynthesis. Its pathway is steroid biosynthesis; estrogen biosynthesis. Catalyzes the second of the four reactions of the long-chain fatty acids elongation cycle. This endoplasmic reticulum-bound enzymatic process, allows the addition of two carbons to the chain of long- and very long-chain fatty acids/VLCFAs per cycle. This enzyme has a 3-ketoacyl-CoA reductase activity, reducing 3-ketoacyl-CoA to 3-hydroxyacyl-CoA, within each cycle of fatty acid elongation. Thereby, it may participate in the production of VLCFAs of different chain lengths that are involved in multiple biological processes as precursors of membrane lipids and lipid mediators. May also catalyze the transformation of estrone (E1) into estradiol (E2) and play a role in estrogen formation. In Rattus norvegicus (Rat), this protein is Very-long-chain 3-oxoacyl-CoA reductase.